The chain runs to 527 residues: Secologanin synthase 2 (527 aa).

Residues 1–11 lie on the Lumenal side of the membrane; sequence MEMDMDIIRKA. The helical transmembrane segment at 12 to 32 threads the bilayer; sequence IAATIFALVMAWAWRVLDWAW. At 33–527 the chain is on the cytoplasmic side; the sequence is FTPKRIEKRL…IYKKLERQNF (495 aa). Residue cysteine 470 participates in heme binding.

It belongs to the cytochrome P450 family. It depends on heme as a cofactor. Expressed in leaves (especially in leaf epidermis), and, to a lower extent, in roots, stems, flower buds and flowers.

It localises to the endoplasmic reticulum membrane. The enzyme catalyses loganin + reduced [NADPH--hemoprotein reductase] + O2 = secologanin + oxidized [NADPH--hemoprotein reductase] + 2 H2O + H(+). The catalysed reaction is secologanin + reduced [NADPH--hemoprotein reductase] + O2 = secoxyloganin + oxidized [NADPH--hemoprotein reductase] + H2O + 2 H(+). It functions in the pathway alkaloid biosynthesis. Its function is as follows. Component of the seco-iridoid and derivatives monoterpenoid indole alkaloids (MIAs, e.g. secologanin) biosynthesis pathway. Catalyzes the conversion of loganin into secologanin. Catalyzes the conversion of secologanin into secoxyloganin. This is Secologanin synthase 2 from Catharanthus roseus (Madagascar periwinkle).